Reading from the N-terminus, the 166-residue chain is Large ribosomal subunit protein uL10 (166 aa).

Belongs to the universal ribosomal protein uL10 family. Part of the ribosomal stalk of the 50S ribosomal subunit. The N-terminus interacts with L11 and the large rRNA to form the base of the stalk. The C-terminus forms an elongated spine to which L12 dimers bind in a sequential fashion forming a multimeric L10(L12)X complex.

In terms of biological role, forms part of the ribosomal stalk, playing a central role in the interaction of the ribosome with GTP-bound translation factors. This is Large ribosomal subunit protein uL10 from Streptococcus sanguinis (strain SK36).